The chain runs to 134 residues: Interleukin-4 (134 aa).

The N-terminal stretch at 1–23 (MGLTYQLLPALVCLLACTSFIQG) is a signal peptide. 2 disulfide bridges follow: Cys24–Cys133 and Cys48–Cys88. N-linked (GlcNAc...) asparagine glycosylation is present at Asn38. An N-linked (GlcNAc...) asparagine glycan is attached at Asn101.

This sequence belongs to the IL-4/IL-13 family.

Its subcellular location is the secreted. Functionally, participates in at least several B-cell activation processes as well as of other cell types. It is a costimulator of DNA-synthesis. It induces the expression of class II MHC molecules on resting B-cells. It enhances both secretion and cell surface expression of IgE and IgG1. It also regulates the expression of the low affinity Fc receptor for IgE (CD23) on both lymphocytes and monocytes. Positively regulates IL31RA expression in macrophages. Stimulates autophagy in dendritic cells by interfering with mTORC1 signaling and through the induction of RUFY4. The sequence is that of Interleukin-4 (IL4) from Equus caballus (Horse).